Consider the following 527-residue polypeptide: GMP synthase [glutamine-hydrolyzing] (527 aa).

Positions lysine 19–aspartate 212 constitute a Glutamine amidotransferase type-1 domain. The active-site Nucleophile is cysteine 96. Residues histidine 186 and glutamate 188 contribute to the active site. In terms of domain architecture, GMPS ATP-PPase spans tryptophan 213–arginine 402. Residue serine 240 to serine 246 coordinates ATP.

Homodimer.

It carries out the reaction XMP + L-glutamine + ATP + H2O = GMP + L-glutamate + AMP + diphosphate + 2 H(+). Its pathway is purine metabolism; GMP biosynthesis; GMP from XMP (L-Gln route): step 1/1. Its function is as follows. Catalyzes the synthesis of GMP from XMP. The chain is GMP synthase [glutamine-hydrolyzing] from Streptococcus thermophilus (strain CNRZ 1066).